Here is a 259-residue protein sequence, read N- to C-terminus: Ribosomal RNA small subunit methyltransferase J (259 aa).

Residues 101-102 (RD), 117-118 (ER), 153-154 (SS), and Asp-176 each bind S-adenosyl-L-methionine.

Belongs to the methyltransferase superfamily. RsmJ family.

Its subcellular location is the cytoplasm. The enzyme catalyses guanosine(1516) in 16S rRNA + S-adenosyl-L-methionine = N(2)-methylguanosine(1516) in 16S rRNA + S-adenosyl-L-homocysteine + H(+). Functionally, specifically methylates the guanosine in position 1516 of 16S rRNA. This is Ribosomal RNA small subunit methyltransferase J from Vibrio vulnificus (strain CMCP6).